Reading from the N-terminus, the 253-residue chain is Blue-light photoreceptor (253 aa).

The region spanning 6–79 (QFDVILKALN…AKIRHAINEK (74 aa)) is the PAS domain. Residue cysteine 56 is modified to S-4a-FMN cysteine. The PAC domain maps to 80 to 133 (STANVLLKNYRKDGTSFMNELTIEPIYDDHEHLYFVGIQKDVTTEHDYQLELEK). An STAS domain is found at 142-253 (STPIVPIKEN…STIKEALQFY (112 aa)).

Post-translationally, FMN binds covalently to cysteine after exposure to blue light and this bond is spontaneously broken in the dark.

In terms of biological role, exhibits the same spectroscopical features and blue-light induced photochemistry as plants phototropins, with the reversible formation of a blue-shifted photoproduct, assigned to an FMN-cysteine thiol adduct. Positive regulator in the activation of the general stress transcription factor sigma-B. The protein is Blue-light photoreceptor of Listeria monocytogenes serovar 1/2a (strain ATCC BAA-679 / EGD-e).